The sequence spans 259 residues: Eukaryotic translation initiation factor 3 subunit G-2 (259 aa).

One can recognise an RRM domain in the interval 179-257 (SAVRISNLSE…LILSVEWSKP (79 aa)).

The protein belongs to the eIF-3 subunit G family. Component of the eukaryotic translation initiation factor 3 (eIF-3) complex. The eIF-3 complex interacts with pix.

The protein localises to the cytoplasm. In terms of biological role, RNA-binding component of the eukaryotic translation initiation factor 3 (eIF-3) complex, which is involved in protein synthesis of a specialized repertoire of mRNAs and, together with other initiation factors, stimulates binding of mRNA and methionyl-tRNAi to the 40S ribosome. The eIF-3 complex specifically targets and initiates translation of a subset of mRNAs involved in cell proliferation. This subunit can bind 18S rRNA. This is Eukaryotic translation initiation factor 3 subunit G-2 from Drosophila virilis (Fruit fly).